Reading from the N-terminus, the 509-residue chain is Coiled-coil domain-containing protein 181 (509 aa).

Residues 46–82 show a composition bias toward basic and acidic residues; the sequence is ENINQDLKENETVMEHTKRHSDPDKSLQDEVSPRRND. Disordered stretches follow at residues 46–120 and 241–367; these read ENIN…EEED and PINN…EEKE. 2 stretches are compositionally biased toward polar residues: residues 243–266 and 300–334; these read NNAN…SVSG and TCPS…STYC. The stretch at 335-375 forms a coiled coil; it reads LSPRQKELQKQLEEKREKLKREEERRKIEEEKEKKRENDIV. Over residues 338–367 the composition is skewed to basic and acidic residues; the sequence is RQKELQKQLEEKREKLKREEERRKIEEEKE.

Belongs to the CCDC181 family. Homodimer. Interacts with HOOK1. Interacts with HOOK2. Interacts with HOOK3.

Its subcellular location is the cytoplasm. It is found in the cytoskeleton. It localises to the cell projection. The protein localises to the cilium. The protein resides in the flagellum. Its function is as follows. Microtubule-binding protein that localizes to the microtubular manchette of elongating spermatids. This is Coiled-coil domain-containing protein 181 from Homo sapiens (Human).